Here is a 119-residue protein sequence, read N- to C-terminus: U-scoloptoxin(01)-Er1a (119 aa).

The N-terminal stretch at 1–22 (MEIHSNIILLLLIALFAIFVKM) is a signal peptide. A Chitin-binding type-2 domain is found at 39 to 97 (NFACSGKKPGFYADEGFDCQVYHMCSPEGQLTTYLCGPGTIFNQKKLVCDLPTNYNCAD). Cys74 and Cys87 form a disulfide bridge.

This sequence belongs to the scoloptoxin-01 family. In terms of processing, contains 3 disulfide bonds. As to expression, expressed by the venom gland.

Its subcellular location is the secreted. The chain is U-scoloptoxin(01)-Er1a from Ethmostigmus rubripes (Giant centipede).